A 72-amino-acid polypeptide reads, in one-letter code: Sec-independent protein translocase protein TatA (72 aa).

Residues 1–21 (MGSFSIWHWLIVLAVVLLLFG) traverse the membrane as a helical segment. Positions 43-72 (MADEDAKEDPRTIDAKAEEPVKDVKKTTKS) are disordered. The segment covering 50–72 (EDPRTIDAKAEEPVKDVKKTTKS) has biased composition (basic and acidic residues).

This sequence belongs to the TatA/E family. As to quaternary structure, the Tat system comprises two distinct complexes: a TatABC complex, containing multiple copies of TatA, TatB and TatC subunits, and a separate TatA complex, containing only TatA subunits. Substrates initially bind to the TatABC complex, which probably triggers association of the separate TatA complex to form the active translocon.

The protein resides in the cell inner membrane. Part of the twin-arginine translocation (Tat) system that transports large folded proteins containing a characteristic twin-arginine motif in their signal peptide across membranes. TatA could form the protein-conducting channel of the Tat system. This chain is Sec-independent protein translocase protein TatA, found in Brucella suis biovar 1 (strain 1330).